A 145-amino-acid chain; its full sequence is Large ribosomal subunit protein bL17 (145 aa).

The segment at 123–145 (KRVDRKKKDPAKDKTEEKKLATA) is disordered.

This sequence belongs to the bacterial ribosomal protein bL17 family. As to quaternary structure, part of the 50S ribosomal subunit. Contacts protein L32.

The polypeptide is Large ribosomal subunit protein bL17 (Pelagibacter ubique (strain HTCC1062)).